Here is a 381-residue protein sequence, read N- to C-terminus: Alanine racemase, catabolic (381 aa).

The Proton acceptor; specific for D-alanine role is filled by Lys-55. Lys-55 is modified (N6-(pyridoxal phosphate)lysine). Position 154 (Arg-154) interacts with substrate. The active-site Proton acceptor; specific for L-alanine is Tyr-276. Residue Met-322 participates in substrate binding.

It belongs to the alanine racemase family. Pyridoxal 5'-phosphate serves as cofactor.

The enzyme catalyses L-alanine = D-alanine. Isomerizes L-alanine to D-alanine which is then oxidized to pyruvate by DadA. This Mesorhizobium japonicum (strain LMG 29417 / CECT 9101 / MAFF 303099) (Mesorhizobium loti (strain MAFF 303099)) protein is Alanine racemase, catabolic (dadB).